A 144-amino-acid chain; its full sequence is Deoxyuridine 5'-triphosphate nucleotidohydrolase (144 aa).

Substrate contacts are provided by residues 63 to 65 (RSG), Asn-76, 80 to 82 (TID), and Lys-90.

This sequence belongs to the dUTPase family. It depends on Mg(2+) as a cofactor.

It carries out the reaction dUTP + H2O = dUMP + diphosphate + H(+). It participates in pyrimidine metabolism; dUMP biosynthesis; dUMP from dCTP (dUTP route): step 2/2. In terms of biological role, this enzyme is involved in nucleotide metabolism: it produces dUMP, the immediate precursor of thymidine nucleotides and it decreases the intracellular concentration of dUTP so that uracil cannot be incorporated into DNA. This Hydrogenobaculum sp. (strain Y04AAS1) protein is Deoxyuridine 5'-triphosphate nucleotidohydrolase.